The chain runs to 1114 residues: MADAIEIEEMMLEDRDIAVVLEVPTRRRRSRERDYRDRRDDSYDDRARRRREDSTDSWSRSRGDENRGQTPRSDSGAKVHDAPKASAPAAQTEEQKKAERLAKLEAWKKKMAEDKERKEKELAAGGTRKLLDDIDQKANGSSSQPSPNTPTTPSTSAISGDLAPTNYAGKFDPKAIAKKAVASSSSAHALGRDLPLKELSKTSATLTSTVKGLQADKKPTAFNSTSKVSALPKTRGNLSVFGLGAKVTDNEKTYQKRALDFDEDEGSRKKLEKLPTLPMANSKEDDAALANGIEGQDDDDDAELEAAGTEEEAAAAARAAAEKREERLQEAESQPHTNGDVHMEDAPQADSTAMDEDEEIDPLDAFMEEMGDPFSLPKSNTTFVKNNTKSQPQEPEALFGDDDVDLKALDADPDEILAIANKARKKKDIPTINYANLNLPPFRKNFYTEPAELVDMTEAEINDLRLELDGIKVAGKDVPKPVQKWSQCGLDVKSLDVIKKLGYDKPTSIQMQAIPAIMSGRDVIGVAKTGSGKTIAFLLPMFRHIRDQRPLKNSDGPIGLIMTPTRELATQIHKECKPFLKAMGLRAVCAYGGAIIKDQIADLKRGAEIIVCTPGRMIELLAANSGRVTNLQRVTYVVLDEADRMFDMGFEPQVMKVFNNIRPNRQTILFSATMPRIMDALAKKTLQSPVEIVVGGRSVVAPEITQIVEVREEKEKFHRLLELLGELYNADEDARTLIFVDRQEKADDLLKDLMRKGYPCMSIHGGKDQVDRDSTIDDFKAGVVPIMIATSVAARGLDVKQLKLVVNFDAPNHLEDYVHRAGRTGRAGNTGTAVTFITEEQEQYSVGIAKALEQSGQEVPERLNEMRKSYKDKVKSGAKKESSGFGGKGLERFDAEREATKARERKIHKLNGDDDEEEKEEKDDDVLLKAASVVQPASASTAPPKLLGVPKGIDLDGDIKVHRTETAASSSGSKNPLDKVTSAIDAINARLNKTGQLRSGVPIDNKGPDAGAFHATLEINDFPQKARWAVTNRTNVAKILEATGTSITTKGSFYPAGKEVQAGGDPKLYILVEGDTEVVVTNAMRELMRLLKEGTMAAADAEGRAPASGRYTVT.

Disordered stretches follow at residues 20–168, 181–200, and 257–356; these read VLEV…TNYA, VASS…KELS, and RALD…AMDE. Composition is skewed to basic and acidic residues over residues 31-67 and 93-122; these read RERD…DENR and EEQK…EKEL. Positions 141–156 are enriched in low complexity; that stretch reads SSSQPSPNTPTTPSTS. 2 stretches are compositionally biased toward basic and acidic residues: residues 190 to 200 and 257 to 273; these read LGRDLPLKELS and RALD…KLEK. Positions 295-313 are enriched in acidic residues; the sequence is GQDDDDDAELEAAGTEEEA. Over residues 320-330 the composition is skewed to basic and acidic residues; the sequence is AAEKREERLQE. The short motif at 483–511 is the Q motif element; it reads QKWSQCGLDVKSLDVIKKLGYDKPTSIQM. The region spanning 514-692 is the Helicase ATP-binding domain; the sequence is IPAIMSGRDV…KKTLQSPVEI (179 aa). 527 to 534 contributes to the ATP binding site; the sequence is AKTGSGKT. Positions 640–643 match the DEAD box motif; sequence DEAD. In terms of domain architecture, Helicase C-terminal spans 703–867; it reads EITQIVEVRE…EVPERLNEMR (165 aa). Basic and acidic residues-rich tracts occupy residues 869 to 882 and 889 to 902; these read SYKD…KKES and GLER…ATKA. Residues 869 to 924 are disordered; it reads SYKDKVKSGAKKESSGFGGKGLERFDAEREATKARERKIHKLNGDDDEEEKEEKDD. The span at 913–924 shows a compositional bias: acidic residues; it reads DDDEEEKEEKDD.

This sequence belongs to the DEAD box helicase family. DDX46/PRP5 subfamily.

It localises to the nucleus. It catalyses the reaction ATP + H2O = ADP + phosphate + H(+). Functionally, ATP-dependent RNA helicase involved spliceosome assembly and in nuclear splicing. Catalyzes an ATP-dependent conformational change of U2 snRNP. Bridges U1 and U2 snRNPs and enables stable U2 snRNP association with intron RNA. The polypeptide is Pre-mRNA-processing ATP-dependent RNA helicase prp5 (prp5) (Sclerotinia sclerotiorum (strain ATCC 18683 / 1980 / Ss-1) (White mold)).